Reading from the N-terminus, the 541-residue chain is Chaperonin GroEL (541 aa).

ATP-binding positions include 30-33 (TLGP), Lys-51, 87-91 (DGTTT), Gly-415, and Asp-495.

It belongs to the chaperonin (HSP60) family. In terms of assembly, forms a cylinder of 14 subunits composed of two heptameric rings stacked back-to-back. Interacts with the co-chaperonin GroES.

It is found in the cytoplasm. The enzyme catalyses ATP + H2O + a folded polypeptide = ADP + phosphate + an unfolded polypeptide.. Its function is as follows. Together with its co-chaperonin GroES, plays an essential role in assisting protein folding. The GroEL-GroES system forms a nano-cage that allows encapsulation of the non-native substrate proteins and provides a physical environment optimized to promote and accelerate protein folding. The polypeptide is Chaperonin GroEL (Pantoea ananas (Erwinia uredovora)).